A 546-amino-acid polypeptide reads, in one-letter code: Glucose-6-phosphate isomerase (546 aa).

The active-site Proton donor is the Glu-353. Residues His-384 and Lys-512 contribute to the active site.

The protein belongs to the GPI family.

It localises to the cytoplasm. It catalyses the reaction alpha-D-glucose 6-phosphate = beta-D-fructose 6-phosphate. Its pathway is carbohydrate biosynthesis; gluconeogenesis. It functions in the pathway carbohydrate degradation; glycolysis; D-glyceraldehyde 3-phosphate and glycerone phosphate from D-glucose: step 2/4. Functionally, catalyzes the reversible isomerization of glucose-6-phosphate to fructose-6-phosphate. The sequence is that of Glucose-6-phosphate isomerase from Methylococcus capsulatus (strain ATCC 33009 / NCIMB 11132 / Bath).